We begin with the raw amino-acid sequence, 132 residues long: Small ribosomal subunit protein uS8c (132 aa).

Belongs to the universal ribosomal protein uS8 family. Part of the 30S ribosomal subunit.

It is found in the plastid. Its subcellular location is the chloroplast. One of the primary rRNA binding proteins, it binds directly to 16S rRNA central domain where it helps coordinate assembly of the platform of the 30S subunit. The chain is Small ribosomal subunit protein uS8c (rps8) from Huperzia lucidula (Shining clubmoss).